A 610-amino-acid chain; its full sequence is MSDQFDAKAFLKTVTSQPGVYRMYDAGGTVIYVGKAKDLKKRLSSYFRSNLASRKTEALVAQIQQIDVTVTHTETEALLLEHNYIKLYQPRYNVLLRDDKSYPFIFLSGDTHPRLAMHRGAKHAKGEYFGPFPNGYAVRETLALLQKIFPIRQCENSVYRNRSRPCLQYQIGRCLGPCVEGLVSEEEYAQQVEYVRLFLSGKDDQVLTQLISRMETASQNLEFEEAARIRDQIQAVRRVTEKQFVSNTGDDLDVIGVAFDAGMACVHVLFIRQGKVLGSRSYFPKVPGSTELSEVVETFVGQFYLQGSQMRTLPGEILLDFNLSDKTLLADSLSELAGRKINVQTKPRGDRARYLKLARTNAATALTSKLSQQSTVHQRLTALASVLKLPEVKRMECFDISHTMGEQTVASCVVFDANGPLRAEYRRYNITGITPGDDYAAMNQVLRRRYGKAIDDSKIPDVILIDGGKGQLAQAKNVFAELDVSWDKNHPLLLGVAKGADRKAGLETLFFEPEGEGFSLPPDSPALHVIQHIRDESHDHAIGGHRKKRAKVKNTSSLETIEGIGPKRRQMLLKYMGGLQGLRNASVEEIAKVPGISQGLAEKIFWSLKH.

Positions 16–94 (SQPGVYRMYD…IKLYQPRYNV (79 aa)) constitute a GIY-YIG domain. Residues 204 to 239 (DQVLTQLISRMETASQNLEFEEAARIRDQIQAVRRV) enclose the UVR domain.

Belongs to the UvrC family. In terms of assembly, interacts with UvrB in an incision complex.

The protein resides in the cytoplasm. The UvrABC repair system catalyzes the recognition and processing of DNA lesions. UvrC both incises the 5' and 3' sides of the lesion. The N-terminal half is responsible for the 3' incision and the C-terminal half is responsible for the 5' incision. The chain is UvrABC system protein C from Escherichia coli O1:K1 / APEC.